The following is a 237-amino-acid chain: Maternal B9.10 protein (237 aa).

This sequence belongs to the BTG family.

The polypeptide is Maternal B9.10 protein (Xenopus laevis (African clawed frog)).